The chain runs to 276 residues: 3beta-hydroxysteroid dehydrogenase (276 aa).

Residues 70 to 71 (DV), Asn97, Tyr162, and Lys166 each bind NADP(+). The Proton acceptor role is filled by Tyr162.

Belongs to the short-chain dehydrogenases/reductases (SDR) family.

It catalyses the reaction 3-oxo-5beta-cholan-24-oate + NADPH + H(+) = isolithocholate + NADP(+). The enzyme catalyses 12alpha-hydroxy-3-oxo-5beta-cholan-24-oate + NADPH + H(+) = isodeoxycholate + NADP(+). The catalysed reaction is 12alpha-hydroxy-3-oxo-5beta-cholan-24-oate + NADH + H(+) = isodeoxycholate + NAD(+). It carries out the reaction 7alpha,12alpha-dihydroxy-3-oxo-5beta-cholan-24-oate + NADPH + H(+) = isocholate + NADP(+). It catalyses the reaction 3-oxochenodeoxycholate + NADPH + H(+) = isochenodeoxycholate + NADP(+). Its function is as follows. Involved in the modification of secondary bile acids into iso-bile acids (3beta-bile acids) via epimerization of the 3-OH group through a 3-oxo-intermediate. Catalyzes the reduction of 12-alpha-hydroxy-3-oxo-5-beta-cholan-24-oate (3-oxo-DCA) and 3-oxo-5-beta-cholan-24-oate (3-oxo-LCA) to yield isodeoxycholate (isoDCA) and isolithocholate (isoLCA), respectively. Is also able to catalyze the reduction of 3-dehydrocholate (3-oxo-CA or 7alpha,12alpha-dihydroxy-3-oxo-5beta-cholan-24-oate) and 7-alpha-hydroxy-3-oxo-5-beta-cholan-24-oate (3-oxo-CDCA), into isocholate (isoCA) and isochenodeoxycholate (isoCDCA), respectively. Accepts both NADPH and NADH as cosubstrates. The conversion of the abundant bile acid deoxycholate (DCA) into isoDCA by the gut bacterium R.gnavus favors the growth of the keystone commensal genus Bacteroides, since isoDCA is less cytotoxic than its parent compound, DCA; iso-bile acids have thus a potential role in modulating gut community composition. The sequence is that of 3beta-hydroxysteroid dehydrogenase from Mediterraneibacter gnavus (strain ATCC 29149 / DSM 114966 / JCM 6515 / VPI C7-9) (Ruminococcus gnavus).